The chain runs to 179 residues: Oryzines biosynthesis cluster protein J (179 aa).

The Cupin type-2 domain maps to 88 to 148; the sequence is YVDYHPGCEP…NHCWRNPSKT (61 aa).

It belongs to the oryJ family.

Its pathway is secondary metabolite biosynthesis. In terms of biological role, part of the gene cluster that mediates the biosynthesis of oryzines, natural products with an unusual maleidride backbone. The two subunits of the fungal fatty acid synthase oryfasA and oryfasB probably form octenoic acid. This fatty acid is most likely activated by the acyl-CoA ligase oryP to give octenyl-CoA before the citrate synthase-like protein oryE catalyzes condensation with oxaloacetate to form tricarboxylic acid. The next steps of the pathways are conjectural, but a favorite possible route has been proposed, beginning with decarboxylation and concomitant dehydration by the decarboxylase oryM, followed by tautomerization, which may lead to the production of a diene intermediate. Reduction of this diene intermediate could give the known metabolite piliformic acid. On the pathway to oryzine B and oryzine A, however, hydroxylation of the diene by the alpha-ketoglutarate-dependent dioxygenase oryG and lactonisation by the lactonohydrolases oryH or oryL could give oryzine B directly. Finally, enoyl reduction by the dehydrogenase oryD would then convert oryzine B into oryzine A. In Aspergillus oryzae (strain ATCC 42149 / RIB 40) (Yellow koji mold), this protein is Oryzines biosynthesis cluster protein J.